The chain runs to 695 residues: UvrABC system protein B (695 aa).

The Helicase ATP-binding domain occupies K25–A176. G38–T45 contacts ATP. Residues Y91–I114 carry the Beta-hairpin motif. Positions L454 to N617 constitute a Helicase C-terminal domain. Residues P652–R687 enclose the UVR domain.

It belongs to the UvrB family. In terms of assembly, forms a heterotetramer with UvrA during the search for lesions. Interacts with UvrC in an incision complex.

It localises to the cytoplasm. Functionally, the UvrABC repair system catalyzes the recognition and processing of DNA lesions. A damage recognition complex composed of 2 UvrA and 2 UvrB subunits scans DNA for abnormalities. Upon binding of the UvrA(2)B(2) complex to a putative damaged site, the DNA wraps around one UvrB monomer. DNA wrap is dependent on ATP binding by UvrB and probably causes local melting of the DNA helix, facilitating insertion of UvrB beta-hairpin between the DNA strands. Then UvrB probes one DNA strand for the presence of a lesion. If a lesion is found the UvrA subunits dissociate and the UvrB-DNA preincision complex is formed. This complex is subsequently bound by UvrC and the second UvrB is released. If no lesion is found, the DNA wraps around the other UvrB subunit that will check the other stand for damage. This chain is UvrABC system protein B, found in Synechococcus sp. (strain JA-2-3B'a(2-13)) (Cyanobacteria bacterium Yellowstone B-Prime).